A 146-amino-acid polypeptide reads, in one-letter code: Hemoglobin subunit beta (146 aa).

The 145-residue stretch at 2 to 146 (HWSAEEKQLI…VAHALARKYH (145 aa)) folds into the Globin domain. Heme b contacts are provided by H63 and H92.

The protein belongs to the globin family. As to quaternary structure, heterotetramer of two alpha chains and two beta chains. As to expression, red blood cells.

Involved in oxygen transport from the lung to the various peripheral tissues. The chain is Hemoglobin subunit beta (HBB) from Eudyptes chrysocome (Western rockhopper penguin).